Reading from the N-terminus, the 328-residue chain is Nickel import system permease protein NikB (328 aa).

Helical transmembrane passes span 11-31, 104-124, 139-159, 170-190, 229-249, and 279-299; these read LMQM…LMKL, LLIS…LGII, VIST…LLFI, ILSQ…AYII, ILPI…GTVV, and VLFI…LTLL. The region spanning 100–297 is the ABC transmembrane type-1 domain; that stretch reads APITLLISFS…IINTIADLLT (198 aa).

Belongs to the binding-protein-dependent transport system permease family. OppBC subfamily. As to quaternary structure, the complex is composed of two ATP-binding proteins (NikD and NikE), two transmembrane proteins (NikB and NikC) and a solute-binding protein (NikA).

Its subcellular location is the cell membrane. Its function is as follows. Part of the ABC transporter complex NikABCDE (Opp2) involved in nickel import. Probably responsible for the translocation of the substrate across the membrane. This Staphylococcus aureus (strain bovine RF122 / ET3-1) protein is Nickel import system permease protein NikB.